The following is a 166-amino-acid chain: Small ribosomal subunit protein uS5 (166 aa).

The region spanning 12–75 (YIEKLVQVNR…EAARRNMIQV (64 aa)) is the S5 DRBM domain.

It belongs to the universal ribosomal protein uS5 family. As to quaternary structure, part of the 30S ribosomal subunit. Contacts proteins S4 and S8.

Functionally, with S4 and S12 plays an important role in translational accuracy. In terms of biological role, located at the back of the 30S subunit body where it stabilizes the conformation of the head with respect to the body. The sequence is that of Small ribosomal subunit protein uS5 from Pseudomonas fluorescens (strain SBW25).